The following is a 394-amino-acid chain: Protein NDRG1 (394 aa).

Ser2 is modified (N-acetylserine). Phosphoserine is present on residues Ser2, Ser319, and Ser326. Residues 325–394 (RSRTASGSSV…AGPKSMEVSC (70 aa)) are disordered. A compositionally biased stretch (polar residues) spans 327-339 (RTASGSSVTSLDG). At Thr328 the chain carries Phosphothreonine; by SGK1. 2 positions are modified to phosphoserine; by SGK1: Ser330 and Ser332. A Phosphoserine modification is found at Ser333. Phosphothreonine is present on Thr335. Ser336 carries the phosphoserine modification. Repeat copies occupy residues 339–348 (GTRSRSHTSE), 349–358 (GTRSRSHTSE), and 359–368 (GTRSRSHTSE). The segment at 339-368 (GTRSRSHTSEGTRSRSHTSEGTRSRSHTSE) is 3 X 10 AA tandem repeats of G-T-R-S-R-S-H-T-S-E. Thr340 carries the post-translational modification Phosphothreonine. A Phosphoserine modification is found at Ser342. Positions 345–371 (HTSEGTRSRSHTSEGTRSRSHTSEGAH) are enriched in basic and acidic residues. The residue at position 346 (Thr346) is a Phosphothreonine; by SGK1. Ser352 carries the phosphoserine modification. Phosphothreonine; by SGK1 is present on Thr356. The residue at position 362 (Ser362) is a Phosphoserine. A Phosphoserine; by SGK1 modification is found at Ser364. Residue Thr366 is modified to Phosphothreonine; by SGK1. A Phosphothreonine modification is found at Thr375.

The protein belongs to the NDRG family. In terms of assembly, interacts with RAB4A (membrane-bound form); the interaction involves NDRG1 in vesicular recycling of CDH1. In terms of processing, under stress conditions, phosphorylated in the C-terminal on many serine and threonine residues. Phosphorylated in vitro by PKA. Phosphorylation enhanced by increased intracellular cAMP levels. Homocysteine induces dephosphorylation. Phosphorylation by SGK1 is cell cycle dependent. In terms of tissue distribution, ubiquitous; expressed most prominently in placental membranes and prostate, kidney, small intestine, and ovary tissues. Also expressed in heart, brain, skeletal muscle, lung, liver and pancreas. Low levels in peripheral blood leukocytes and in tissues of the immune system. Expressed mainly in epithelial cells. Also found in Schwann cells of peripheral neurons. Reduced expression in adenocarcinomas compared to normal tissues. In colon, prostate and placental membranes, the cells that border the lumen show the highest expression.

It localises to the cytoplasm. The protein resides in the cytosol. It is found in the cytoskeleton. The protein localises to the microtubule organizing center. Its subcellular location is the centrosome. It localises to the nucleus. The protein resides in the cell membrane. Its function is as follows. Stress-responsive protein involved in hormone responses, cell growth, and differentiation. Acts as a tumor suppressor in many cell types. Necessary but not sufficient for p53/TP53-mediated caspase activation and apoptosis. Has a role in cell trafficking, notably of the Schwann cell, and is necessary for the maintenance and development of the peripheral nerve myelin sheath. Required for vesicular recycling of CDH1 and TF. May also function in lipid trafficking. Protects cells from spindle disruption damage. Functions in p53/TP53-dependent mitotic spindle checkpoint. Regulates microtubule dynamics and maintains euploidy. The protein is Protein NDRG1 (NDRG1) of Homo sapiens (Human).